The chain runs to 352 residues: Maleylacetate reductase (352 aa).

It belongs to the iron-containing alcohol dehydrogenase family.

The enzyme catalyses 3-oxoadipate + NAD(+) = maleylacetate + NADH + H(+). It carries out the reaction 3-oxoadipate + NADP(+) = maleylacetate + NADPH + H(+). It functions in the pathway aromatic compound metabolism; 3-chlorocatechol degradation. This Pseudomonas aeruginosa protein is Maleylacetate reductase (clcE).